We begin with the raw amino-acid sequence, 486 residues long: Cardiolipin synthase A (486 aa).

2 consecutive transmembrane segments (helical) span residues 3–23 and 38–58; these read TVYT…IAGV and MAWL…YLAV. 2 PLD phosphodiesterase domains span residues 219-246 and 399-426; these read MDLR…VDPR and EGGL…DMRS. Active-site residues include histidine 224, lysine 226, aspartate 231, histidine 404, lysine 406, and aspartate 411.

Belongs to the phospholipase D family. Cardiolipin synthase subfamily. ClsA sub-subfamily.

The protein localises to the cell inner membrane. It carries out the reaction 2 a 1,2-diacyl-sn-glycero-3-phospho-(1'-sn-glycerol) = a cardiolipin + glycerol. Catalyzes the reversible phosphatidyl group transfer from one phosphatidylglycerol molecule to another to form cardiolipin (CL) (diphosphatidylglycerol) and glycerol. The protein is Cardiolipin synthase A of Escherichia coli O7:K1 (strain IAI39 / ExPEC).